Reading from the N-terminus, the 424-residue chain is tRNA(Ile)-lysidine synthase (424 aa).

26–31 (SGGIDS) contacts ATP.

The protein belongs to the tRNA(Ile)-lysidine synthase family.

It is found in the cytoplasm. It catalyses the reaction cytidine(34) in tRNA(Ile2) + L-lysine + ATP = lysidine(34) in tRNA(Ile2) + AMP + diphosphate + H(+). Functionally, ligates lysine onto the cytidine present at position 34 of the AUA codon-specific tRNA(Ile) that contains the anticodon CAU, in an ATP-dependent manner. Cytidine is converted to lysidine, thus changing the amino acid specificity of the tRNA from methionine to isoleucine. The sequence is that of tRNA(Ile)-lysidine synthase from Streptococcus agalactiae serotype V (strain ATCC BAA-611 / 2603 V/R).